A 190-amino-acid chain; its full sequence is Dynein axonemal light chain 1 (190 aa).

Position 2 is an N-acetylalanine (A2). LRR repeat units follow at residues 49–70 (NCEK…NGLK), 71–92 (NLRI…EAVG), 94–115 (TLEE…HVMK), and 116–137 (KLKI…LKLA). S56 bears the Phosphoserine mark. One can recognise an LRRCT domain in the interval 150 to 190 (NPLEEKHSAEGNWIDEATKRVPKLKKLDGTPVIKEDEEEES).

The protein belongs to the dynein light chain LC1-type family. In terms of assembly, interacts with ZMYND10 (via C-terminus). Interacts with DNAH5, a outer arm dynein heavy chain. Interacts with tubulin located within the A-tubule of the outer doublets in a ATP-independent manner. In terms of tissue distribution, expressed in the respiratory epithelium of the upper airways and the ependymal cells lining the brain ventricles.

The protein localises to the cytoplasm. Its subcellular location is the cytoskeleton. The protein resides in the cilium axoneme. In terms of biological role, part of the multisubunit axonemal ATPase complexes that generate the force for cilia motility and govern beat frequency. Component of the outer arm dynein (ODA). May be involved in a mechanosensory feedback mechanism controlling ODA activity based on external conformational cues by tethering the outer arm dynein heavy chain (DNAH5) to the microtubule within the axoneme. Important for ciliary function in the airways and for the function of the cilia that produce the nodal flow essential for the determination of the left-right asymmetry. The protein is Dynein axonemal light chain 1 (Dnal1) of Mus musculus (Mouse).